A 307-amino-acid polypeptide reads, in one-letter code: Ornithine carbamoyltransferase (307 aa).

Residues 54-57, Gln81, Arg105, and 132-135 each bind carbamoyl phosphate; these read STRT and HPCQ. Residues Asn163, Asp221, and 225 to 226 each bind L-ornithine; that span reads SM. Carbamoyl phosphate contacts are provided by residues 261-262 and Arg289; that span reads CL.

Belongs to the aspartate/ornithine carbamoyltransferase superfamily. OTCase family.

It localises to the cytoplasm. The catalysed reaction is carbamoyl phosphate + L-ornithine = L-citrulline + phosphate + H(+). It participates in amino-acid biosynthesis; L-arginine biosynthesis; L-arginine from L-ornithine and carbamoyl phosphate: step 1/3. Functionally, reversibly catalyzes the transfer of the carbamoyl group from carbamoyl phosphate (CP) to the N(epsilon) atom of ornithine (ORN) to produce L-citrulline. The polypeptide is Ornithine carbamoyltransferase (Chromobacterium violaceum (strain ATCC 12472 / DSM 30191 / JCM 1249 / CCUG 213 / NBRC 12614 / NCIMB 9131 / NCTC 9757 / MK)).